Reading from the N-terminus, the 231-residue chain is Proteasome subunit alpha type-2 (231 aa).

Belongs to the peptidase T1A family. The 26S proteasome consists of a 20S proteasome core and two 19S regulatory subunits. The 20S proteasome core is composed of 28 subunits that are arranged in four stacked rings, resulting in a barrel-shaped structure. The two end rings are each formed by seven alpha subunits, and the two central rings are each formed by seven beta subunits. The catalytic chamber with the active sites is on the inside of the barrel.

It is found in the cytoplasm. It localises to the nucleus. The proteasome is a multicatalytic proteinase complex which is characterized by its ability to cleave peptides with Arg, Phe, Tyr, Leu, and Glu adjacent to the leaving group at neutral or slightly basic pH. The proteasome has an ATP-dependent proteolytic activity. The polypeptide is Proteasome subunit alpha type-2 (pas-2) (Caenorhabditis elegans).